Here is a 694-residue protein sequence, read N- to C-terminus: Two-component response regulator ORR25 (694 aa).

A Response regulatory domain is found at 17-132 (RVLAVDDSPV…DIQNIWQHVW (116 aa)). Aspartate 68 is modified (4-aspartylphosphate). Residues 183-242 (TLKRQRVVWTPELHRDFVIAVHELGVDRAVPRKILRMMKVDYMTRENIASHLQKYRLYLK) form the HTH myb-type domain. The H-T-H motif DNA-binding region spans 213–238 (PRKILRMMKVDYMTRENIASHLQKYR). Residues 326–349 (VGHGGSPGNNPVFQPLQNSSNARK) form a disordered region. Residues 333–347 (GNNPVFQPLQNSSNA) show a composition bias toward polar residues.

Belongs to the ARR family. Type-B subfamily. Post-translationally, two-component system major event consists of a His-to-Asp phosphorelay between a sensor histidine kinase (HK) and a response regulator (RR). In plants, the His-to-Asp phosphorelay involves an additional intermediate named Histidine-containing phosphotransfer protein (HPt). This multistep phosphorelay consists of a His-Asp-His-Asp sequential transfer of a phosphate group between first a His and an Asp of the HK protein, followed by the transfer to a conserved His of the HPt protein and finally the transfer to an Asp in the receiver domain of the RR protein.

It localises to the nucleus. In terms of biological role, transcriptional activator that binds specific DNA sequence. Functions as a response regulator involved in His-to-Asp phosphorelay signal transduction system. Phosphorylation of the Asp residue in the receiver domain activates the ability of the protein to promote the transcription of target genes. May directly activate some type-A response regulators in response to cytokinins. This chain is Two-component response regulator ORR25, found in Oryza sativa subsp. japonica (Rice).